The following is a 271-amino-acid chain: Formamidopyrimidine-DNA glycosylase (271 aa).

Proline 2 (schiff-base intermediate with DNA) is an active-site residue. Glutamate 3 acts as the Proton donor in catalysis. Catalysis depends on lysine 57, which acts as the Proton donor; for beta-elimination activity. Residues histidine 90, arginine 109, and arginine 151 each coordinate DNA. Residues 236 to 270 form an FPG-type zinc finger; sequence MVYGRAGEACVTCKTKLQEIRQSNRSSVFCPSCQQ. Arginine 260 serves as the catalytic Proton donor; for delta-elimination activity.

This sequence belongs to the FPG family. Monomer. It depends on Zn(2+) as a cofactor.

The enzyme catalyses Hydrolysis of DNA containing ring-opened 7-methylguanine residues, releasing 2,6-diamino-4-hydroxy-5-(N-methyl)formamidopyrimidine.. The catalysed reaction is 2'-deoxyribonucleotide-(2'-deoxyribose 5'-phosphate)-2'-deoxyribonucleotide-DNA = a 3'-end 2'-deoxyribonucleotide-(2,3-dehydro-2,3-deoxyribose 5'-phosphate)-DNA + a 5'-end 5'-phospho-2'-deoxyribonucleoside-DNA + H(+). In terms of biological role, involved in base excision repair of DNA damaged by oxidation or by mutagenic agents. Acts as a DNA glycosylase that recognizes and removes damaged bases. Has a preference for oxidized purines, such as 7,8-dihydro-8-oxoguanine (8-oxoG). Has AP (apurinic/apyrimidinic) lyase activity and introduces nicks in the DNA strand. Cleaves the DNA backbone by beta-delta elimination to generate a single-strand break at the site of the removed base with both 3'- and 5'-phosphates. This is Formamidopyrimidine-DNA glycosylase from Colwellia psychrerythraea (strain 34H / ATCC BAA-681) (Vibrio psychroerythus).